We begin with the raw amino-acid sequence, 121 residues long: Ribonuclease P protein component 4 (121 aa).

Zn(2+) is bound by residues Cys-63, Cys-66, Cys-89, and Cys-92.

Belongs to the eukaryotic/archaeal RNase P protein component 4 family. As to quaternary structure, consists of a catalytic RNA component and at least 4-5 protein subunits. Zn(2+) is required as a cofactor.

It localises to the cytoplasm. It catalyses the reaction Endonucleolytic cleavage of RNA, removing 5'-extranucleotides from tRNA precursor.. Its function is as follows. Part of ribonuclease P, a protein complex that generates mature tRNA molecules by cleaving their 5'-ends. In Methanobrevibacter smithii (strain ATCC 35061 / DSM 861 / OCM 144 / PS), this protein is Ribonuclease P protein component 4.